We begin with the raw amino-acid sequence, 141 residues long: Protein C19orf12 homolog (141 aa).

The chain crosses the membrane as a helical span at residues 33–53 (LVAAAGAFLGGLVGGPPGIAV).

The protein belongs to the C19orf12 family.

It is found in the mitochondrion. The protein resides in the mitochondrion membrane. It localises to the endoplasmic reticulum. The protein localises to the cytoplasm. Its subcellular location is the cytosol. This Xenopus tropicalis (Western clawed frog) protein is Protein C19orf12 homolog.